Here is a 908-residue protein sequence, read N- to C-terminus: MFGKLLTKVFGSRNDRTLKGLQKVVNKINALEADYEKLTDEQLKAKTAEFRERLAAGASLDSIMAEAFATVREASKRVFEMRHFDVQLLGGMVLDSNRIAEMRTGEGKTLTATLPAYLNALTGKGVHVITVNDYLARRDAENNRPLFEFLGLTVGINVAGLSQQAKKDAYNADITYGTNNEFGFDYLRDNMAFSPQERVQRPLHYALIDEVDSILIDEARTPLIISGAAEDSSELYIKINTLIPNLIRQDKEDSEEYVGEGDYSIDEKAKQVHFTERGQEKVENLLIERGMLAEGDSLYSAANISLLHHVNAALRAHTLFERDVDYIVQDGEVIIVDEHTGRTMPGRRWSEGLHQAVEAKEGVRIQNENQTLASITFQNYFRQYEKLAGMTGTADTEAFEFQHIYGLDTVVVPTNRPMVRKDMADLVYLTANEKYQAIIKDIKDCRERGQPVLVGTVSIEQSELLARLMVKEKIPHQVLNAKFHEKEAEIVAQAGRTGAVTIATNMAGRGTDIVLGGNWNMEIEALENPTAEQKAKIKADWQERHDAVVAAGGLHILGTERHESRRIDNQLRGRAGRQGDAGSSRFYLSMEDSLMRIFASDRVSGMMKKLGMEEGEAIEHPWVSRAIENAQRKVEARNFDIRKQLLEFDDVANDQRQVVYAQRNELMDAESIEDTIKNIQDDVISAVIDQYIPPQSVEELWDVPGLEQRLQQEFMLKLPIQEWLDKEDDLHEETLRERIITSWSDAYKAKEEMVGAPVLRQFEKAVMLQTLDGLWKEHLAAMDHLRQGIHLRGYAQKNPKQEYKRESFELFQQLLSTLKHDVISVLSKVQVQAQSDVEEMEARRREEDAKIQRDYQHAAAEALVGGDDGSDEMMAHTPMIRDGDKVGRNDPCPCGSGRKYKQCHGKLS.

ATP is bound by residues Gln87, 105–109, and Asp512; that span reads GEGKT. Residues 865–908 form a disordered region; sequence GGDDGSDEMMAHTPMIRDGDKVGRNDPCPCGSGRKYKQCHGKLS. The segment covering 879–888 has biased composition (basic and acidic residues); that stretch reads MIRDGDKVGR. 4 residues coordinate Zn(2+): Cys892, Cys894, Cys903, and His904. The segment covering 898–908 has biased composition (basic residues); it reads RKYKQCHGKLS.

The protein belongs to the SecA family. Monomer and homodimer. Part of the essential Sec protein translocation apparatus which comprises SecA, SecYEG and auxiliary proteins SecDF-YajC and YidC. Zn(2+) serves as cofactor.

It localises to the cell inner membrane. The protein localises to the cytoplasm. It carries out the reaction ATP + H2O + cellular proteinSide 1 = ADP + phosphate + cellular proteinSide 2.. Part of the Sec protein translocase complex. Interacts with the SecYEG preprotein conducting channel. Has a central role in coupling the hydrolysis of ATP to the transfer of proteins into and across the cell membrane, serving both as a receptor for the preprotein-SecB complex and as an ATP-driven molecular motor driving the stepwise translocation of polypeptide chains across the membrane. The chain is Protein translocase subunit SecA from Shewanella sp. (strain MR-7).